Reading from the N-terminus, the 708-residue chain is B-cell lymphoma 6 protein homolog (708 aa).

Residues 32-99 (TDVVIIVNRE…MYTSRLNLRE (68 aa)) form the BTB domain. Basic and acidic residues predominate over residues 303 to 317 (AKEEERTSSEDEISQ). Disordered regions lie at residues 303–371 (AKEE…KSPT) and 431–470 (PTKM…QSPL). Polar residues-rich tracts occupy residues 333 to 370 (SPQS…TKSP) and 431 to 454 (PTKM…NIVN). 6 C2H2-type zinc fingers span residues 520-543 (FFCN…LQVH), 548-570 (YKCD…KTVH), 576-598 (YRCN…TRIH), 604-626 (YKCE…VLIH), 632-654 (YPCE…LRIH), and 660-683 (YHCE…RQKH).

The protein resides in the nucleus. Its function is as follows. Transcriptional repressor mainly required for germinal center (GC) formation and antibody affinity maturation which has different mechanisms of action specific to the lineage and biological functions. Forms complexes with different corepressors and histone deacetylases to repress the transcriptional expression of different subsets of target genes. Represses its target genes by binding directly to the DNA sequence 5'-TTCCTAGAA-3' (BCL6-binding site) or indirectly by repressing the transcriptional activity of transcription factors. In GC B-cells, represses genes that function in differentiation, inflammation, apoptosis and cell cycle control, also autoregulates its transcriptional expression and up-regulates, indirectly, the expression of some genes important for GC reactions, such as AICDA, through the repression of microRNAs expression. An important function is to allow GC B-cells to proliferate very rapidly in response to T-cell dependent antigens and tolerate the physiological DNA breaks required for immunglobulin class switch recombination and somatic hypermutation without inducing a p53/TP53-dependent apoptotic response. In follicular helper CD4(+) T-cells (T(FH) cells), promotes the expression of T(FH)-related genes but inhibits the differentiation of T(H)1, T(H)2 and T(H)17 cells. Also required for the establishment and maintenance of immunological memory for both T- and B-cells. Suppresses macrophage proliferation through competition with STAT5 for STAT-binding motifs binding on certain target genes, such as CCL2 and CCND2. In response to genotoxic stress, controls cell cycle arrest in GC B-cells in both p53/TP53-dependedent and -independent manners. Besides, also controls neurogenesis through the alteration of the composition of NOTCH-dependent transcriptional complexes at selective NOTCH targets, such as HES5, including the recruitment of the deacetylase SIRT1 and resulting in an epigenetic silencing leading to neuronal differentiation. The sequence is that of B-cell lymphoma 6 protein homolog from Gallus gallus (Chicken).